We begin with the raw amino-acid sequence, 513 residues long: Cytochrome P450 monooxygenase ARMGADRAFT_1018418 (513 aa).

The chain crosses the membrane as a helical span at residues 1 to 21; sequence MTHASSAWFLAAVVIVTFIVV. Heme is bound at residue cysteine 435. Asparagine 442 is a glycosylation site (N-linked (GlcNAc...) asparagine).

The protein belongs to the cytochrome P450 family. The cofactor is heme.

The protein resides in the membrane. Its pathway is secondary metabolite biosynthesis. Cytochrome P450 monooxygenase, part of the gene cluster that mediates the biosynthesis of melleolides, a range of antifungal and phytotoxic polyketide derivatives composed of an orsellinic acid (OA) moiety esterified to various sesquiterpene alcohols. The first step in melleolides biosynthesis is performed by the delta(6)-protoilludene synthase PRO1 which catalyzes the cyclization of farnesyl diphosphate to protoilludene. The orsellinic acid synthase armB produces OA by condensing acetyl-CoA with 3 malonyl-CoA units in a three-round chain elongation reaction folowed by a C2-C7 ring closure. ArmB further catalyzes the trans-esterification of OA to the various sesquiterpene alcohols resulting from the hydroxylation of protoilludene. The melleolides cluster also includes 5 cytochrome P450 monooxygenases, 4 NAD(+)-dependent oxidoreductases, one flavin-dependent oxidoreductase, and one O-methyltransferase. The cytochrome P450 monooxygenases may be involved in protoilludene hydroxylation to elaborate melleolides with multiple alcohol groups, such as melleolide D, which carries alcohol functionalities at C-4, C-5, C-10, and C-13. The role of the NAD(+)-dependent enzymes remains unknown. Numerous melleolides, including arnamial, show 5'-O-methylation of the aromatic moiety which may be catalyzed by the methyltransferase encoded in the cluster. The flavin-dependent oxidoreductase might represent the dehydrogenase yielding the aldehyde in position 1 of arnamial and other melleolides. Finally, several halogenase localized outside of the cluster, are able to catalyze the transfer of a single chlorine atom to the melleolide backbone, resulting in a 6'-chloromelleolide product. The chain is Cytochrome P450 monooxygenase ARMGADRAFT_1018418 from Armillaria gallica (Bulbous honey fungus).